The following is a 394-amino-acid chain: MGDSSKKVKDSFDTISEPDSFDEPKGVPISMEPVFSTAAGIRIDVKQESIDKSKKMLNSDLKSKSSSKGGFSSPLVRKNNGSSAFVSPFRREGTSSTTTKRPASGGFEDFEAPPAKKSTSSSSKKSKKHSKKEKKKEFKEIHADVLRVSRIYEKDKFRIILQESSSTPLILATCSYNRGSDIKFGDRIHVDAEVCKKSSSGDVTEIYIDRVLKNKENGAKSGIRRHSIAKKPFCIKPRFIHELSDTKIKKTVVQVNLLDLNLDFYAGCSKCKHSLPEAANQCEFCKDSQGKSELSMYSRVRVMDFSGQMFINVTTKNMKKLLDLLGYEGFDNWFRFKDPQERQNYVFRPVMVEIEKSNDEWECTDVAEVDWKDFGSYLKHKEDKKKRRSKKKHP.

The segment covering Met-1–Phe-12 has biased composition (basic and acidic residues). 2 disordered regions span residues Met-1–Ser-30 and Met-56–Lys-136. An interaction with rad-51 region spans residues Met-1–Asp-60. The interval Pro-28–Lys-62 is BRCA2 repeat-like region. The segment covering Met-56 to Ser-73 has biased composition (low complexity). The interval Asp-60–Phe-89 is interaction with rad-51-DNA complexes. The span at Lys-124–Lys-134 shows a compositional bias: basic residues. A required for ssDNA binding region spans residues Trp-371–Ser-389.

Interacts (via N-terminus) with rad-51; regulates rad-51 recruitment to sites of DNA double strand breaks. In terms of tissue distribution, expressed in the germline, with highest expression in cells undergoing oogenesis.

Its subcellular location is the nucleus. The protein resides in the chromosome. In terms of biological role, required for the homologous recombination repair of DNA double strand breaks, thereby playing a role in chromosome integrity. Acts by targeting rad-51 to sites of DNA damage and stabilizing rad-51-DNA filaments by blocking ATP hydrolysis catalyzed by rad-51. Promotes rad-51 mediated displacement-loop (D-loop) formation during strand invasion between the invading single-stranded DNA (ssDNA) and the homologous duplex DNA. Also functions independently of rad-51 in DNA double-strand break (DSB) repair by promoting DNA single-strand annealing (SSA) when the homologous recombination (HR) and non-homologous end joining (NHEJ) pathways are compromised. Binds selectively to single-stranded (ssDNA) via its C-terminus. Involved in telomere maintenance and replicative senescence. This is DNA repair protein brc-2 from Caenorhabditis elegans.